A 278-amino-acid chain; its full sequence is Tryptophan synthase alpha chain (278 aa).

Active-site proton acceptor residues include Glu61 and Asp72.

This sequence belongs to the TrpA family. In terms of assembly, tetramer of two alpha and two beta chains.

It carries out the reaction (1S,2R)-1-C-(indol-3-yl)glycerol 3-phosphate + L-serine = D-glyceraldehyde 3-phosphate + L-tryptophan + H2O. Its pathway is amino-acid biosynthesis; L-tryptophan biosynthesis; L-tryptophan from chorismate: step 5/5. Its function is as follows. The alpha subunit is responsible for the aldol cleavage of indoleglycerol phosphate to indole and glyceraldehyde 3-phosphate. In Shewanella oneidensis (strain ATCC 700550 / JCM 31522 / CIP 106686 / LMG 19005 / NCIMB 14063 / MR-1), this protein is Tryptophan synthase alpha chain.